Reading from the N-terminus, the 132-residue chain is Histone H2A.2 (132 aa).

The protein belongs to the histone H2A family. As to quaternary structure, the nucleosome is a histone octamer containing two molecules each of H2A, H2B, H3 and H4 assembled in one H3-H4 heterotetramer and two H2A-H2B heterodimers. The octamer wraps approximately 147 bp of DNA.

The protein localises to the nucleus. The protein resides in the chromosome. Its function is as follows. Core component of nucleosome. Nucleosomes wrap and compact DNA into chromatin, limiting DNA accessibility to the cellular machineries which require DNA as a template. Histones thereby play a central role in transcription regulation, DNA repair, DNA replication and chromosomal stability. DNA accessibility is regulated via a complex set of post-translational modifications of histones, also called histone code, and nucleosome remodeling. This is Histone H2A.2 from Leishmania infantum.